The primary structure comprises 363 residues: Spermidine/putrescine import ATP-binding protein PotA 2 (363 aa).

In terms of domain architecture, ABC transporter spans 6–236 (LEIRNVTRRF…PRSRFVADFI (231 aa)). An ATP-binding site is contributed by 38 to 45 (GPSGCGKT).

The protein belongs to the ABC transporter superfamily. Spermidine/putrescine importer (TC 3.A.1.11.1) family. The complex is composed of two ATP-binding proteins (PotA), two transmembrane proteins (PotB and PotC) and a solute-binding protein (PotD).

Its subcellular location is the cell inner membrane. It catalyses the reaction ATP + H2O + polyamine-[polyamine-binding protein]Side 1 = ADP + phosphate + polyamineSide 2 + [polyamine-binding protein]Side 1.. Part of the ABC transporter complex PotABCD involved in spermidine/putrescine import. Responsible for energy coupling to the transport system. In Pseudomonas aeruginosa (strain ATCC 15692 / DSM 22644 / CIP 104116 / JCM 14847 / LMG 12228 / 1C / PRS 101 / PAO1), this protein is Spermidine/putrescine import ATP-binding protein PotA 2.